The primary structure comprises 314 residues: Glycerate dehydrogenase (314 aa).

Residues T74, 157–158 (AL), 228–230 (TAR), and D254 contribute to the NAD(+) site. Residue R230 is part of the active site. E259 is a catalytic residue. Catalysis depends on H280, which acts as the Proton donor. Position 280-283 (280-283 (HVAW)) interacts with NAD(+).

It belongs to the D-isomer specific 2-hydroxyacid dehydrogenase family. Homodimer.

The protein localises to the cytoplasm. The catalysed reaction is (R)-glycerate + NAD(+) = 3-hydroxypyruvate + NADH + H(+). It functions in the pathway one-carbon metabolism; formaldehyde assimilation via serine pathway. In terms of biological role, plays a central role in assimilation of carbon. It converts hydroxypyruvate to glycerate as a key step in the serine cycle, and may also play an important role in C2 reactions, by interconverting glyoxylate and glycolate. The protein is Glycerate dehydrogenase (hprA) of Methylorubrum extorquens (strain ATCC 14718 / DSM 1338 / JCM 2805 / NCIMB 9133 / AM1) (Methylobacterium extorquens).